A 452-amino-acid polypeptide reads, in one-letter code: Zinc finger protein 277 (452 aa).

The C2H2-type 1 zinc finger occupies 200 to 224 (LMCLYCEKIFRDRPTLKEHMRKKGH). The interval 248–271 (APTPRKQHLQKRRRETASVSTVAD) is disordered. The span at 252–261 (RKQHLQKRRR) shows a compositional bias: basic residues. A C2H2-type 2 zinc finger spans residues 361 to 385 (LRCVTCDLQFDEEELLVEHMAQESH).

This sequence belongs to the ZNF277 family. In terms of assembly, interacts with components of the origin recognition complex (ORC) complex, Orc2 and Orc3, components of the SAGA transcription coactivator-HAT complex, Gcn5 and e(y)2, components of the mRNP biogenesis THO complex, thoc5 and e(y)2, and a component of the TFIID complex, TBP. Also interacts with polybromo, a component of the chromatin remodeling SWI/SNF complex.

It is found in the nucleus. It localises to the cytoplasm. DNA binding protein which is involved in the positive regulation of both basal and inducible transcription. Mainly localizes to active promoter sites and interacts with components of various transcription and replication regulatory complexes, such as the ORC, SAGA, THO, TFIID and SWI/SNF complexes. It may therefore regulate transcription by promoting the association of these complexes to their binding sites. The sequence is that of Zinc finger protein 277 from Drosophila melanogaster (Fruit fly).